The primary structure comprises 133 residues: ATP synthase epsilon chain, chloroplastic (133 aa).

Belongs to the ATPase epsilon chain family. In terms of assembly, F-type ATPases have 2 components, CF(1) - the catalytic core - and CF(0) - the membrane proton channel. CF(1) has five subunits: alpha(3), beta(3), gamma(1), delta(1), epsilon(1). CF(0) has three main subunits: a, b and c.

The protein resides in the plastid. It localises to the chloroplast thylakoid membrane. In terms of biological role, produces ATP from ADP in the presence of a proton gradient across the membrane. This chain is ATP synthase epsilon chain, chloroplastic, found in Gossypium barbadense (Sea Island cotton).